The chain runs to 470 residues: Homogentisate 1,2-dioxygenase (470 aa).

Fe cation-binding residues include histidine 356, glutamate 362, and histidine 392.

This sequence belongs to the homogentisate dioxygenase family. Fe cation is required as a cofactor.

The enzyme catalyses homogentisate + O2 = 4-maleylacetoacetate + H(+). It functions in the pathway amino-acid degradation; L-phenylalanine degradation; acetoacetate and fumarate from L-phenylalanine: step 4/6. The protein is Homogentisate 1,2-dioxygenase (HGO) of Oryza sativa subsp. japonica (Rice).